A 159-amino-acid chain; its full sequence is Urease accessory protein UreE (159 aa).

The interval 140-159 (GAYHGTGHHHHGHGHDPHHG) is disordered.

Belongs to the UreE family.

It localises to the cytoplasm. Functionally, involved in urease metallocenter assembly. Binds nickel. Probably functions as a nickel donor during metallocenter assembly. This is Urease accessory protein UreE from Sinorhizobium fredii (strain NBRC 101917 / NGR234).